The following is a 318-amino-acid chain: MIETNVSRRHHETFIQVIQSYYQLTKPRIIPLLLITTAGSMWIAAQGQVDPVLLLVTMAGGTLAAASAQTINCIYDRDIDYEMERTRHRPMPSGKVQVRDALIFAIALAVLSFTLLTVFANLLAASLALSGIIFYVLIYTHWLKRHSTQNIVIGGAAGAIPALVGWAAVTGTLSWSAWLIFAIVFLWTPPHFWALALMIRDDYAKVGIPMLPVVEGNAATVKQIWYYTLITVAATLLLVYPLHASGIVYAAIAISLGAVFIRKSWRLLHNPEDRPTARELFLYSISYMMLLCLGMVVDSLPLTHHLVNAAINQLHLIS.

Helical transmembrane passes span 29–49 (IIPLLLITTAGSMWIAAQGQV), 51–71 (PVLLLVTMAGGTLAAASAQTI), 102–122 (LIFAIALAVLSFTLLTVFANL), 123–143 (LAASLALSGIIFYVLIYTHWL), 151–171 (IVIGGAAGAIPALVGWAAVTG), 179–199 (LIFAIVFLWTPPHFWALALMI), 219–239 (ATVKQIWYYTLITVAATLLLV), 241–261 (PLHASGIVYAAIAISLGAVFI), and 280–300 (LFLYSISYMMLLCLGMVVDSL).

Belongs to the UbiA prenyltransferase family. Protoheme IX farnesyltransferase subfamily.

It localises to the cell inner membrane. The enzyme catalyses heme b + (2E,6E)-farnesyl diphosphate + H2O = Fe(II)-heme o + diphosphate. It participates in porphyrin-containing compound metabolism; heme O biosynthesis; heme O from protoheme: step 1/1. In terms of biological role, converts heme B (protoheme IX) to heme O by substitution of the vinyl group on carbon 2 of heme B porphyrin ring with a hydroxyethyl farnesyl side group. This Nostoc sp. (strain PCC 7120 / SAG 25.82 / UTEX 2576) protein is Protoheme IX farnesyltransferase.